The sequence spans 285 residues: Eukaryotic translation initiation factor 3 subunit F-2 (285 aa).

In terms of domain architecture, MPN spans 11 to 145 (VFIKPLVLFQ…TRLYCAVEIG (135 aa)).

The protein belongs to the eIF-3 subunit F family. As to quaternary structure, component of the eukaryotic translation initiation factor 3 (eIF-3) complex. The eIF-3 complex interacts with pix.

The protein localises to the cytoplasm. Its function is as follows. Component of the eukaryotic translation initiation factor 3 (eIF-3) complex, which is involved in protein synthesis of a specialized repertoire of mRNAs and, together with other initiation factors, stimulates binding of mRNA and methionyl-tRNAi to the 40S ribosome. The eIF-3 complex specifically targets and initiates translation of a subset of mRNAs involved in cell proliferation. The sequence is that of Eukaryotic translation initiation factor 3 subunit F-2 from Drosophila yakuba (Fruit fly).